We begin with the raw amino-acid sequence, 943 residues long: Neutral alpha-glucosidase AB (943 aa).

A signal peptide spans 1–23; the sequence is MRKLVILIILSIVCSLFIGSIES. The segment at 186 to 231 is disordered; sequence FEPISDKPQPLPPKEKKSEEENKEANQEEDNNNNNNDNNEEQQVST. Residues 198 to 211 show a composition bias toward basic and acidic residues; the sequence is PKEKKSEEENKEAN. Asp540 acts as the Nucleophile in catalysis. The active site involves Glu543. The Proton donor role is filled by Asp617. N-linked (GlcNAc...) asparagine glycosylation is found at Asn878, Asn887, and Asn907.

This sequence belongs to the glycosyl hydrolase 31 family.

It is found in the endoplasmic reticulum. It localises to the golgi apparatus. It catalyses the reaction N(4)-(alpha-D-Glc-(1-&gt;3)-alpha-D-Man-(1-&gt;2)-alpha-D-Man-(1-&gt;2)-alpha-D-Man-(1-&gt;3)-[alpha-D-Man-(1-&gt;2)-alpha-D-Man-(1-&gt;3)-[alpha-D-Man-(1-&gt;2)-alpha-D-Man-(1-&gt;6)]-alpha-D-Man-(1-&gt;6)]-beta-D-Man-(1-&gt;4)-beta-D-GlcNAc-(1-&gt;4)-beta-D-GlcNAc)-L-asparaginyl-[protein] + H2O = N(4)-(alpha-D-Man-(1-&gt;2)-alpha-D-Man-(1-&gt;2)-alpha-D-Man-(1-&gt;3)-[alpha-D-Man-(1-&gt;2)-alpha-D-Man-(1-&gt;3)-[alpha-D-Man-(1-&gt;2)-alpha-D-Man-(1-&gt;6)]-alpha-D-Man-(1-&gt;6)]-beta-D-Man-(1-&gt;4)-beta-D-GlcNAc-(1-&gt;4)-beta-D-GlcNAc)-L-asparaginyl-[protein] (N-glucan mannose isomer 9A1,2,3B1,2,3) + beta-D-glucose. The catalysed reaction is N(4)-(alpha-D-Glc-(1-&gt;3)-alpha-D-Glc-(1-&gt;3)-alpha-D-Man-(1-&gt;2)-alpha-D-Man-(1-&gt;2)-alpha-D-Man-(1-&gt;3)-[alpha-D-Man-(1-&gt;2)-alpha-D-Man-(1-&gt;3)-[alpha-D-Man-(1-&gt;2)-alpha-D-Man-(1-&gt;6)]-alpha-D-Man-(1-&gt;6)]-beta-D-Man-(1-&gt;4)-beta-D-GlcNAc-(1-&gt;4)-beta-D-GlcNAc)-L-asparaginyl-[protein] + H2O = N(4)-(alpha-D-Glc-(1-&gt;3)-alpha-D-Man-(1-&gt;2)-alpha-D-Man-(1-&gt;2)-alpha-D-Man-(1-&gt;3)-[alpha-D-Man-(1-&gt;2)-alpha-D-Man-(1-&gt;3)-[alpha-D-Man-(1-&gt;2)-alpha-D-Man-(1-&gt;6)]-alpha-D-Man-(1-&gt;6)]-beta-D-Man-(1-&gt;4)-beta-D-GlcNAc-(1-&gt;4)-beta-D-GlcNAc)-L-asparaginyl-[protein] + beta-D-glucose. The protein operates within glycan metabolism; N-glycan metabolism. In terms of biological role, cleaves sequentially the 2 innermost alpha-1,3-linked glucose residues from N-linked oligosaccharides on newly synthesized glycoproteins. The polypeptide is Neutral alpha-glucosidase AB (modA) (Dictyostelium discoideum (Social amoeba)).